We begin with the raw amino-acid sequence, 351 residues long: Dihydroorotate dehydrogenase (quinone) (351 aa).

FMN is bound by residues Ala-61 to Lys-65 and Thr-85. Lys-65 contacts substrate. Asn-110–Phe-114 is a binding site for substrate. FMN is bound by residues Asn-139 and Asn-172. Asn-172 contributes to the substrate binding site. Residue Ser-175 is the Nucleophile of the active site. Asn-177 is a binding site for substrate. 2 residues coordinate FMN: Lys-217 and Thr-245. A substrate-binding site is contributed by Asn-246 to Thr-247. FMN contacts are provided by residues Gly-268, Gly-297, and Tyr-318–Ser-319.

The protein belongs to the dihydroorotate dehydrogenase family. Type 2 subfamily. In terms of assembly, monomer. The cofactor is FMN.

Its subcellular location is the cell membrane. It carries out the reaction (S)-dihydroorotate + a quinone = orotate + a quinol. It functions in the pathway pyrimidine metabolism; UMP biosynthesis via de novo pathway; orotate from (S)-dihydroorotate (quinone route): step 1/1. Catalyzes the conversion of dihydroorotate to orotate with quinone as electron acceptor. This is Dihydroorotate dehydrogenase (quinone) from Stenotrophomonas maltophilia (strain R551-3).